Here is an 899-residue protein sequence, read N- to C-terminus: MTSESSPLLHYRLFSVSDGGLGPPDSSPIMTDAVTVGTGPTQRKLSTFFGVVVPTVLSMFSIVVFMRIGFVVGHAGLLQSLLMLFVAYVIIWLTVLSVCAISTNGAVQGGGAYFMISRTLGPEFGGSIGLMFYLANVFACGVYVLGLVEAVLDVFGRDPSDVTDSLRSLPQGYGYSFLYASIILLLCMAICLVGASIYSQASFFIFLLVFVVLLTILISFLAVRPLTVSIRHGGNVTMTGVYTGINSSTLHNNLQADYSLDYTTGNLMNFATVFAVMFNGCTGIMAGCNLSGELKQPSRSIPMGTIIAVIITFFVYLILFIFTAFTCDRTLLREDYGFFRSINIWPPFVLIGVYATSLSASMSTLIGASRILHALAKDDLFGVLLAPAKLVSKGGNPWGAVVYTWALVQLVLLAGKLNTIAGIVTVFYLIAYAAIDLACLALEWASAPNFRPTFRFFSWHTCLLGILSSLVMMFLINPAYASGSIVLLLLLLGSIHFRSSSSSWGYISQALIFHQVRKYLLLLDVRKDHVKFWRPQILLMVSNPRTSSQLIRFVNDLKKGGLYILGHVETGDLDTLPSDPVQTHYSFWLSLVDKLNVKAFVDLTLCPSVRQGTQHLLRITGLGGMKPNTVVLGFYDDACPDDYFLQDSLFTPGLSPKDDAFGVDATSLQAHFPPARDPETPRLLSAKDYVSMICDALKMHKNIVLARNFPLLVRPEASSSSPATYIDVWPLDLLRPQASAYVDVCSLFLLQMACILNMAASWRRYQLRVFLCVESRGGSDGASGWLAAEAKFRELLSKLRIRALIRVVAWDRVAAFRVQNMGGQVLNREPISSEYLNAAKSAVTDEGGTETAVRFLYLPRPPADSSLHERYLEELDTLTSGLGPTLLIHGLTPVTCTEL.

The Cytoplasmic segment spans residues Met1 to Lys44. Residues Leu45–Phe65 form a helical membrane-spanning segment. Residues Met66–Ser80 are Extracellular-facing. The chain crosses the membrane as a helical span at residues Leu81–Ile101. At Ser102 to Ser127 the chain is on the cytoplasmic side. Residues Ile128–Val148 form a helical membrane-spanning segment. Topologically, residues Glu149–Ser176 are extracellular. The helical transmembrane segment at Phe177 to Ile197 threads the bilayer. The Cytoplasmic segment spans residues Tyr198 to Ser202. A helical membrane pass occupies residues Phe203–Val223. The Extracellular segment spans residues Arg224–Asn266. 2 N-linked (GlcNAc...) asparagine glycosylation sites follow: Asn235 and Asn246. A helical transmembrane segment spans residues Leu267–Gly287. At Cys288–Gly304 the chain is on the cytoplasmic side. A helical membrane pass occupies residues Thr305–Phe325. Topologically, residues Thr326 to Pro347 are extracellular. A helical transmembrane segment spans residues Phe348–Ala368. At Ser369–Lys393 the chain is on the cytoplasmic side. Residues Gly394–Ala414 traverse the membrane as a helical segment. Residues Gly415 to Thr419 are Extracellular-facing. The chain crosses the membrane as a helical span at residues Ile420 to Leu440. The Cytoplasmic portion of the chain corresponds to Ala441 to Ser469. The helical transmembrane segment at Leu470 to Leu490 threads the bilayer. Topologically, residues Leu491–Ser739 are extracellular. A helical transmembrane segment spans residues Ala740–Ala760. Topologically, residues Ser761–Leu899 are cytoplasmic.

This sequence belongs to the SLC12A transporter family.

The protein resides in the cell membrane. It is found in the lysosome membrane. Functionally, seems to correspond to a subunit of a multimeric transport system and thus, additional subunits may be required for its function. May play a role in lysosomal ion flux and osmoregulation. This Xenopus laevis (African clawed frog) protein is Solute carrier family 12 member 9 (slc12a9).